A 69-amino-acid polypeptide reads, in one-letter code: Pleurain-A4 (69 aa).

An N-terminal signal peptide occupies residues 1 to 22 (MFTLKKTLLLLFFLGTISISLC). The propeptide occupies 23 to 43 (KQERDADEDDGRKMTEEEVKR). A disulfide bond links Cys63 and Cys69.

Belongs to the frog skin active peptide (FSAP) family. Pleurain subfamily. In terms of tissue distribution, expressed by the skin glands.

Its subcellular location is the secreted. Its function is as follows. Antimicrobial peptide. Has activity against Gram-positive and -negative bacteria, and fungi. Has little hemolytic activity on red blood cells. This Nidirana pleuraden (Yunnan pond frog) protein is Pleurain-A4.